The primary structure comprises 112 residues: Large ribosomal subunit protein uL24 (112 aa).

This sequence belongs to the universal ribosomal protein uL24 family. As to quaternary structure, part of the 50S ribosomal subunit.

One of two assembly initiator proteins, it binds directly to the 5'-end of the 23S rRNA, where it nucleates assembly of the 50S subunit. Functionally, one of the proteins that surrounds the polypeptide exit tunnel on the outside of the subunit. This chain is Large ribosomal subunit protein uL24, found in Desulfitobacterium hafniense (strain Y51).